We begin with the raw amino-acid sequence, 387 residues long: DNA-damage-repair/toleration protein 111 (387 aa).

The tract at residues 1–213 (MLGGLYGDLP…TSGLGVGAGG (213 aa)) is disordered. Positions 19–29 (SGNSSSVWSSS) are enriched in low complexity. Over residues 103-158 (DPARPNDYEEYKREKKRKATEAEMKREMDKRRQEDEERDKREREEREKERERDNSD) the composition is skewed to basic and acidic residues. Residues 214-260 (QMTAAQRMMAKMGWKQGQGLGKSEQGITTPLMAKKTDRRAGVIVNAS) enclose the G-patch domain. The RRM domain maps to 283–369 (RVLLLRNMVG…RTVRATFYDE (87 aa)).

Component of the SWAP1-SFPS-RRC1 splicing factor complex which modulates pre-mRNA splicing to promote photomorphogenesis. Interacts with SWAP1 in a light-independent manner. Associates with the photoreceptor phytochrome B (phyB) in nuclear photobodies upon response to red light. Binds to the splicing factor 1 SF1, involved in 3' splicing site recognition. As to expression, expressed ubiquitously with highest levels in dry seeds and in cells surrounding the base of trichomes and guard cells.

The protein resides in the nucleus. It is found in the nucleus speckle. In terms of biological role, as a member of the SWAP1-SFPS-RRC1 splicing factor complex, modulates photomorphogenesis by regulating the gene expression and pre-messenger RNA (mRNA) alternative splicing of a large number of genes, including those involved in plant responses to light signaling, probably by helping in the 3' splice site determination. Associates with and regulates EARLY FLOWERING 3 (ELF3) mRNA processing, a key component of the circadian clock also involved in photomorphogenesis. Required for light-regulated (red, far-red and blue lights) photomorphogenesis in a PHYB- and PHYTOCHROME INTERACTING FACTORS- (PIFs) dependent manner. Promotes flowering under both short (SD) and long days (LD). Controls abscisic acid (ABA) sensitivity during seed development, stomatal responsiveness and germination by monitoring ABI3 splicing, upstream of the splicing factor SUPPRESSOR OF ABI3-ABI5. Seems to be involved in the resistance to UV light and chemical DNA-damaging agents. This is DNA-damage-repair/toleration protein 111 from Arabidopsis thaliana (Mouse-ear cress).